Consider the following 724-residue polypeptide: Protein Aster-A (724 aa).

The span at Met1–Ser18 shows a compositional bias: low complexity. Positions Met1–Arg66 are disordered. Residues Thr57–Arg66 show a composition bias toward polar residues. Residues Glu91–Lys158 form the GRAM domain. Residues Ser256–Leu336 form a disordered region. A phosphoserine mark is found at Ser263, Ser267, and Ser271. The span at Asp300–Thr312 shows a compositional bias: polar residues. Over residues Asp326 to Leu336 the composition is skewed to low complexity. The VASt domain maps to Ser367–Leu538. Ser415 is modified (phosphoserine). Residues Ser560–Ala579 form a disordered region. The span at Ala563–Pro575 shows a compositional bias: basic and acidic residues. Residues Leu610–Phe630 form a helical membrane-spanning segment.

As to expression, expressed in liver.

It localises to the endoplasmic reticulum membrane. The protein localises to the cell membrane. The protein resides in the cytoplasmic vesicle. Its subcellular location is the autophagosome. Cholesterol transporter that mediates non-vesicular transport of cholesterol from the plasma membrane (PM) to the endoplasmic reticulum (ER). Contains unique domains for binding cholesterol and the PM, thereby serving as a molecular bridge for the transfer of cholesterol from the PM to the ER. Plays a crucial role in cholesterol homeostasis and has the unique ability to localize to the PM based on the level of membrane cholesterol. In lipid-poor conditions localizes to the ER membrane and in response to excess cholesterol in the PM is recruited to the endoplasmic reticulum-plasma membrane contact sites (EPCS) which is mediated by the GRAM domain. At the EPCS, the sterol-binding VASt/ASTER domain binds to the cholesterol in the PM and facilitates its transfer from the PM to ER. May play a role in tumor progression. Plays a role in autophagy regulation and is required for biogenesis of the autophagosome. This function in autophagy requires its cholesterol-transfer activity. This chain is Protein Aster-A, found in Homo sapiens (Human).